A 172-amino-acid chain; its full sequence is uncharacterized protein (172 aa).

This is an uncharacterized protein from Orgyia pseudotsugata (Douglas-fir tussock moth).